A 336-amino-acid chain; its full sequence is Dihydroorotate dehydrogenase (quinone) (336 aa).

Residues A62–K66 and T86 contribute to the FMN site. Residue K66 coordinates substrate. Substrate is bound at residue N111–F115. FMN is bound by residues N139 and N172. N172 lines the substrate pocket. S175 (nucleophile) is an active-site residue. N177 provides a ligand contact to substrate. Positions 217 and 245 each coordinate FMN. N246–T247 contacts substrate. Residues G268, G297, and Y318–S319 contribute to the FMN site.

The protein belongs to the dihydroorotate dehydrogenase family. Type 2 subfamily. Monomer. FMN is required as a cofactor.

It localises to the cell membrane. It carries out the reaction (S)-dihydroorotate + a quinone = orotate + a quinol. It participates in pyrimidine metabolism; UMP biosynthesis via de novo pathway; orotate from (S)-dihydroorotate (quinone route): step 1/1. Catalyzes the conversion of dihydroorotate to orotate with quinone as electron acceptor. In Vibrio vulnificus (strain CMCP6), this protein is Dihydroorotate dehydrogenase (quinone).